The following is an 817-amino-acid chain: DNA ligase (817 aa).

NAD(+)-binding positions include 45–49 (DVEYD), 94–95 (SI), and Glu-131. The N6-AMP-lysine intermediate role is filled by Lys-133. Positions 154, 193, 311, and 335 each coordinate NAD(+). Residues Cys-444, Cys-447, Cys-462, and Cys-468 each contribute to the Zn(2+) site. The BRCT domain occupies 733-817 (AEEGVLDGKT…LLKKPAGDQA (85 aa)).

Belongs to the NAD-dependent DNA ligase family. LigA subfamily. Mg(2+) serves as cofactor. The cofactor is Mn(2+).

It catalyses the reaction NAD(+) + (deoxyribonucleotide)n-3'-hydroxyl + 5'-phospho-(deoxyribonucleotide)m = (deoxyribonucleotide)n+m + AMP + beta-nicotinamide D-nucleotide.. Its function is as follows. DNA ligase that catalyzes the formation of phosphodiester linkages between 5'-phosphoryl and 3'-hydroxyl groups in double-stranded DNA using NAD as a coenzyme and as the energy source for the reaction. It is essential for DNA replication and repair of damaged DNA. This Ralstonia pickettii (strain 12J) protein is DNA ligase.